A 405-amino-acid chain; its full sequence is 2,3-diketo-5-methylthiopentyl-1-phosphate enolase (405 aa).

Lysine 91 functions as the Proton acceptor in the catalytic mechanism. Residues lysine 140, 166–169, histidine 257, glycine 329, and 351–352 each bind substrate; these read KDDE and GG. Lysine 166, aspartate 168, and glutamate 169 together coordinate Mg(2+). An N6-carboxylysine modification is found at lysine 166.

This sequence belongs to the RuBisCO large chain family. Type IV subfamily. In terms of assembly, homodimer. Requires Mg(2+) as cofactor.

It catalyses the reaction 5-methylsulfanyl-2,3-dioxopentyl phosphate = 2-hydroxy-5-methylsulfanyl-3-oxopent-1-enyl phosphate. Its pathway is amino-acid biosynthesis; L-methionine biosynthesis via salvage pathway; L-methionine from S-methyl-5-thio-alpha-D-ribose 1-phosphate: step 3/6. Functionally, catalyzes the enolization of 2,3-diketo-5-methylthiopentyl-1-phosphate (DK-MTP-1-P) into 2-hydroxy-3-keto-5-methylthiopentenyl-1-phosphate (HK-MTPenyl-1-P). The sequence is that of 2,3-diketo-5-methylthiopentyl-1-phosphate enolase from Bacillus licheniformis (strain ATCC 14580 / DSM 13 / JCM 2505 / CCUG 7422 / NBRC 12200 / NCIMB 9375 / NCTC 10341 / NRRL NRS-1264 / Gibson 46).